We begin with the raw amino-acid sequence, 312 residues long: Lipid-translocating exporter-like protein RTA1 (312 aa).

Positions 1-21 (MSPESKKITAHGSTSMPLSRT) are disordered. A compositionally biased stretch (polar residues) spans 11-21 (HGSTSMPLSRT). 6 helical membrane passes run 29–49 (IPLTVGAIFSVIGFLQRFFLA), 61–81 (LSTMFILGAGPTYAGADYFIC), 103–123 (FITFDVLAEVCVWTGAGLLAG), 142–162 (AMITQAFLFTSFVAILASFHV), 183–203 (FMMVVHSLYASSIFIIIRSAY), and 223–243 (SLMLLNTAMFNVFHPGHILPI). N-linked (GlcNAc...) asparagine glycosylation is found at Asn-258 and Asn-304.

It belongs to the lipid-translocating exporter (LTE) (TC 9.A.26.1) family.

It is found in the membrane. The protein operates within siderophore biosynthesis. Functionally, lipid-translocating exporter-like protein; part of the gene cluster that mediates the biosynthesis of hydroxamate-containing siderophores that play a critical role in virulence via intracellular iron acquisition during macrophage infection. This Ajellomyces capsulatus (Darling's disease fungus) protein is Lipid-translocating exporter-like protein RTA1.